Consider the following 427-residue polypeptide: MACARPLISVYSEKGESSGKNVTLPAVFKAPIRPDIVNFVHTNLRKNNRQPYAVSELAGHQTSAESWGTGRAVARIPRVRGGGTHRSGQGAFGNMCRGGRMFAPTKTWRRWHRRVNTTQKRYAICSALAASALPALVMSKGHSIEEVPELPLVVEDKVEGYKKTKEAVLLLKKLKAWNDIKKVYASQRMRAGKGKMRNRRRIQRRGPCIIYNEDNGIIKAFRNIPGITLLNVSKLNILKLAPGGHVGRFCIWTESAFRKLDELYGTWRKAASLKSNYNLPMHKMINTDLSRILKSPEIQRALRAPRKKIHRRVLKKNPLKNLRIMLKLNPYAKTMRWNTILRQARNHKLRVDKAAAAAAALEAKSDEKAAVAGKKPVVGKKGKKVAVGVKKQKKPLVGKKAAATKKPAPEKKSTEKKPTTEEKKPAA.

Ala2 carries the post-translational modification N-acetylalanine. Lys14 is modified (N6-acetyllysine). Omega-N-methylarginine is present on Arg97. Lys106 carries the post-translational modification N6-acetyllysine. Residue Lys239 forms a Glycyl lysine isopeptide (Lys-Gly) (interchain with G-Cter in SUMO2) linkage. The residue at position 259 (Lys259) is an N6-acetyllysine. The residue at position 266 (Thr266) is a Phosphothreonine. Phosphoserine occurs at positions 290 and 295. Arg300 is modified (citrulline). Lys327 is covalently cross-linked (Glycyl lysine isopeptide (Lys-Gly) (interchain with G-Cter in SUMO2)). Lys333 and Lys353 each carry N6-acetyllysine. Position 364 is an N6-acetyllysine; alternate (Lys364). Residue Lys364 forms a Glycyl lysine isopeptide (Lys-Gly) (interchain with G-Cter in SUMO1); alternate linkage. Phosphoserine is present on Ser365. The tract at residues Ala369 to Ala427 is disordered. Residues Val377–Val397 are compositionally biased toward basic residues. Basic and acidic residues predominate over residues Pro407–Ala427.

Belongs to the universal ribosomal protein uL4 family. As to quaternary structure, component of the large ribosomal subunit. May bind IPO9 with low affinity. Interacts with RBM3. Citrullinated by PADI4.

The protein resides in the cytoplasm. Component of the large ribosomal subunit. The ribosome is a large ribonucleoprotein complex responsible for the synthesis of proteins in the cell. In Macaca fascicularis (Crab-eating macaque), this protein is Large ribosomal subunit protein uL4 (RPL4).